The primary structure comprises 181 residues: Cytidylate kinase (181 aa).

Residue 7 to 15 (GPPGSGTTS) coordinates ATP.

This sequence belongs to the cytidylate kinase family. Type 2 subfamily.

Its subcellular location is the cytoplasm. The catalysed reaction is CMP + ATP = CDP + ADP. It catalyses the reaction dCMP + ATP = dCDP + ADP. The polypeptide is Cytidylate kinase (Methanoculleus marisnigri (strain ATCC 35101 / DSM 1498 / JR1)).